A 196-amino-acid polypeptide reads, in one-letter code: Ankyrin repeat domain-containing protein 66 (196 aa).

3 ANK repeats span residues 7–37 (SDMT…DPNY), 43–72 (NDRT…RPCL), and 76–105 (VGWT…AIDA). A disordered region spans residues 152 to 196 (ERDEDWDAKKRELELSLPSLNQNMNKKNKKSRGPTRPSNTKGRRV). Residues 187–196 (RPSNTKGRRV) show a composition bias toward polar residues.

This chain is Ankyrin repeat domain-containing protein 66 (ANKRD66), found in Homo sapiens (Human).